The sequence spans 270 residues: ATP synthase subunit a (270 aa).

7 consecutive transmembrane segments (helical) span residues 29 to 49 (VDTF…FAMV), 87 to 107 (IAPL…MDLF), 108 to 128 (PVDL…GLEP), 140 to 160 (DVNA…GFSI), 182 to 202 (PVGA…ELAA), 220 to 240 (LIFI…GAPW), and 241 to 261 (AIFH…LTIV).

This sequence belongs to the ATPase A chain family. As to quaternary structure, F-type ATPases have 2 components, CF(1) - the catalytic core - and CF(0) - the membrane proton channel. CF(1) has five subunits: alpha(3), beta(3), gamma(1), delta(1), epsilon(1). CF(0) has three main subunits: a(1), b(2) and c(9-12). The alpha and beta chains form an alternating ring which encloses part of the gamma chain. CF(1) is attached to CF(0) by a central stalk formed by the gamma and epsilon chains, while a peripheral stalk is formed by the delta and b chains.

It localises to the cell inner membrane. Its function is as follows. Key component of the proton channel; it plays a direct role in the translocation of protons across the membrane. The polypeptide is ATP synthase subunit a (Chromobacterium violaceum (strain ATCC 12472 / DSM 30191 / JCM 1249 / CCUG 213 / NBRC 12614 / NCIMB 9131 / NCTC 9757 / MK)).